A 438-amino-acid chain; its full sequence is Xylose isomerase (438 aa).

Catalysis depends on residues His100 and Asp103. Glu231, Glu267, His270, Asp295, Asp306, Asp308, and Asp338 together coordinate Mg(2+).

It belongs to the xylose isomerase family. As to quaternary structure, homotetramer. Mg(2+) serves as cofactor.

The protein resides in the cytoplasm. It carries out the reaction alpha-D-xylose = alpha-D-xylulofuranose. The sequence is that of Xylose isomerase from Caldanaerobacter subterraneus subsp. yonseiensis (Thermoanaerobacter yonseiensis).